A 217-amino-acid chain; its full sequence is Adenylate kinase (217 aa).

Residue 10–15 (GAGKGT) coordinates ATP. The segment at 30 to 59 (STGDMFRAAMKEETPLGLEAKSYIDKGELV) is NMP. Residues threonine 31, arginine 36, 57–59 (ELV), 85–88 (GFPR), and glutamine 92 contribute to the AMP site. The segment at 126–163 (GRRICSVCGTTYHLVFNPPKTPGVCDKDGGDLYQRADD) is LID. An ATP-binding site is contributed by arginine 127. Zn(2+) is bound by residues cysteine 130 and cysteine 133. 136-137 (TY) is a binding site for ATP. The Zn(2+) site is built by cysteine 150 and aspartate 153. AMP-binding residues include arginine 160 and arginine 171. Glutamine 199 contributes to the ATP binding site.

It belongs to the adenylate kinase family. Monomer.

It is found in the cytoplasm. The enzyme catalyses AMP + ATP = 2 ADP. It functions in the pathway purine metabolism; AMP biosynthesis via salvage pathway; AMP from ADP: step 1/1. Catalyzes the reversible transfer of the terminal phosphate group between ATP and AMP. Plays an important role in cellular energy homeostasis and in adenine nucleotide metabolism. The chain is Adenylate kinase from Bacillus velezensis (strain DSM 23117 / BGSC 10A6 / LMG 26770 / FZB42) (Bacillus amyloliquefaciens subsp. plantarum).